The sequence spans 629 residues: DNA topoisomerase 4 subunit B (629 aa).

ATP contacts are provided by residues tyrosine 4, asparagine 41, aspartate 68, 109–115 (GLHGVGI), and lysine 333. The region spanning 411-524 (AELFLVEGDS…AGHVYVAMPP (114 aa)) is the Toprim domain. Positions 417, 489, and 491 each coordinate Mg(2+).

The protein belongs to the type II topoisomerase family. ParE type 1 subfamily. Heterotetramer composed of ParC and ParE. The cofactor is Mg(2+). Requires Mn(2+) as cofactor. It depends on Ca(2+) as a cofactor.

It catalyses the reaction ATP-dependent breakage, passage and rejoining of double-stranded DNA.. In terms of biological role, topoisomerase IV is essential for chromosome segregation. It relaxes supercoiled DNA. Performs the decatenation events required during the replication of a circular DNA molecule. In Pseudomonas aeruginosa (strain ATCC 15692 / DSM 22644 / CIP 104116 / JCM 14847 / LMG 12228 / 1C / PRS 101 / PAO1), this protein is DNA topoisomerase 4 subunit B.